Here is a 132-residue protein sequence, read N- to C-terminus: Agouti-signaling protein (132 aa).

Residues 1–22 (MDVTRLLLATLLVFLCFFTVYS) form the signal peptide. Asn39 carries an N-linked (GlcNAc...) asparagine glycan. The segment at 62-88 (ISRKEAEKKRSSKKEASMKKVAQPRTP) is disordered. Residues 63-79 (SRKEAEKKRSSKKEASM) show a composition bias toward basic and acidic residues. 5 disulfide bridges follow: Cys93-Cys108, Cys100-Cys114, Cys107-Cys125, Cys111-Cys132, and Cys116-Cys123. An Agouti domain is found at 93–132 (CVATRYSCKPPAPACCDPCASCQCRFFRSACSCRVLRLNC).

It is found in the secreted. Involved in the regulation of melanogenesis. The binding of ASP to MC1R precludes alpha-MSH initiated signaling and thus blocks production of cAMP, leading to a down-regulation of eumelanogenesis (brown/black pigment) and thus increasing synthesis of pheomelanin (yellow/red pigment). This Semnopithecus entellus (Northern plains gray langur) protein is Agouti-signaling protein (ASIP).